We begin with the raw amino-acid sequence, 359 residues long: MITVNVDLGDRAYPIHIGAGLIGRTELFAPHIKGSSVTIVTNTTVDPLYGDALRAALAPLGKRVSTVVLPDGEAYKNWETLNLIFDGLLTDHADRKTTLVALGGGVVGDMTGFAAACYMRGVPFIQVPTTLLSQVDSSVGGKTGINHPLGKNMIGAFYQPQAVIADIGALTTLPDRELAAGVAEVIKTGAIADAGFFDWIEANVEALNRREPAALAHAVKRSCEIKASVVAADEREGGLRAILNFGHTFGHAIEAGLGYGEWLHGEAVGCGMVMAGDLSVRLGLLDEASRQRLDAVIAAAHLPTRGPALGDARYMDLMRVDKKAEAGAIKFVLLKRFGDTLITQAPDEAVFATLAQTTR.

NAD(+) contacts are provided by residues 71–76 (DGEAYK), 105–109 (GVVGD), 129–130 (TT), Lys-142, and Lys-151. 3 residues coordinate Zn(2+): Glu-184, His-247, and His-264.

Belongs to the sugar phosphate cyclases superfamily. Dehydroquinate synthase family. It depends on Co(2+) as a cofactor. The cofactor is Zn(2+). NAD(+) serves as cofactor.

Its subcellular location is the cytoplasm. It catalyses the reaction 7-phospho-2-dehydro-3-deoxy-D-arabino-heptonate = 3-dehydroquinate + phosphate. Its pathway is metabolic intermediate biosynthesis; chorismate biosynthesis; chorismate from D-erythrose 4-phosphate and phosphoenolpyruvate: step 2/7. Functionally, catalyzes the conversion of 3-deoxy-D-arabino-heptulosonate 7-phosphate (DAHP) to dehydroquinate (DHQ). This chain is 3-dehydroquinate synthase, found in Burkholderia orbicola (strain MC0-3).